The following is a 511-amino-acid chain: Thioredoxin reductase 2, mitochondrial (511 aa).

The transit peptide at 1-21 (MAALRGAAARFRGRAPGGARG) directs the protein to the mitochondrion. 29–58 (DLLVIGGGSGGLACAKEAAQLGKKVAVLDY) serves as a coordination point for FAD. Cysteines 74 and 79 form a disulfide. An N6-succinyllysine modification is found at K316. The active-site Proton acceptor is the H484. A cross-link (cysteinyl-selenocysteine (Cys-Sec)) is located at residues 509-510 (CU). Position 510 (U510) is a non-standard amino acid, selenocysteine.

Belongs to the class-I pyridine nucleotide-disulfide oxidoreductase family. In terms of assembly, homodimer. FAD is required as a cofactor.

Its subcellular location is the mitochondrion. It catalyses the reaction [thioredoxin]-dithiol + NADP(+) = [thioredoxin]-disulfide + NADPH + H(+). With respect to regulation, inhibited by 1-chloro-2,4-dinitrobenzene and by zinc, calcium, magnesium and Fe(2+) ions. Its function is as follows. Involved in the control of reactive oxygen species levels and the regulation of mitochondrial redox homeostasis. Maintains thioredoxin in a reduced state. May play a role in redox-regulated cell signaling. The polypeptide is Thioredoxin reductase 2, mitochondrial (TXNRD2) (Bos taurus (Bovine)).